Reading from the N-terminus, the 455-residue chain is Bifunctional protein GlmU (455 aa).

The pyrophosphorylase stretch occupies residues M1 to R226. UDP-N-acetyl-alpha-D-glucosamine contacts are provided by residues L8–G11, K22, Q73, G78–T79, Y99–D101, G136, E151, N166, and N224. D101 is a binding site for Mg(2+). Residue N224 coordinates Mg(2+). The segment at R227–Q247 is linker. The tract at residues G248–S455 is N-acetyltransferase. Residues R330 and K348 each coordinate UDP-N-acetyl-alpha-D-glucosamine. H360 functions as the Proton acceptor in the catalytic mechanism. Residues Y363 and N374 each contribute to the UDP-N-acetyl-alpha-D-glucosamine site. Residues A377, N383–Y384, S402, A420, and R437 each bind acetyl-CoA.

This sequence in the N-terminal section; belongs to the N-acetylglucosamine-1-phosphate uridyltransferase family. In the C-terminal section; belongs to the transferase hexapeptide repeat family. Homotrimer. Requires Mg(2+) as cofactor.

Its subcellular location is the cytoplasm. It catalyses the reaction alpha-D-glucosamine 1-phosphate + acetyl-CoA = N-acetyl-alpha-D-glucosamine 1-phosphate + CoA + H(+). It carries out the reaction N-acetyl-alpha-D-glucosamine 1-phosphate + UTP + H(+) = UDP-N-acetyl-alpha-D-glucosamine + diphosphate. Its pathway is nucleotide-sugar biosynthesis; UDP-N-acetyl-alpha-D-glucosamine biosynthesis; N-acetyl-alpha-D-glucosamine 1-phosphate from alpha-D-glucosamine 6-phosphate (route II): step 2/2. It functions in the pathway nucleotide-sugar biosynthesis; UDP-N-acetyl-alpha-D-glucosamine biosynthesis; UDP-N-acetyl-alpha-D-glucosamine from N-acetyl-alpha-D-glucosamine 1-phosphate: step 1/1. It participates in bacterial outer membrane biogenesis; LPS lipid A biosynthesis. Functionally, catalyzes the last two sequential reactions in the de novo biosynthetic pathway for UDP-N-acetylglucosamine (UDP-GlcNAc). The C-terminal domain catalyzes the transfer of acetyl group from acetyl coenzyme A to glucosamine-1-phosphate (GlcN-1-P) to produce N-acetylglucosamine-1-phosphate (GlcNAc-1-P), which is converted into UDP-GlcNAc by the transfer of uridine 5-monophosphate (from uridine 5-triphosphate), a reaction catalyzed by the N-terminal domain. The chain is Bifunctional protein GlmU from Pseudomonas putida (strain ATCC 700007 / DSM 6899 / JCM 31910 / BCRC 17059 / LMG 24140 / F1).